The chain runs to 84 residues: Polyketide-8 synthase acyl carrier protein 1 (84 aa).

Residues 7 to 82 (AARKQEIKEI…GVYVVVSEAA (76 aa)) enclose the Carrier domain. S42 carries the post-translational modification O-(pantetheine 4'-phosphoryl)serine.

4'-phosphopantetheine is transferred from CoA to a specific serine of the apo-ACP-like protein.

Its function is as follows. Acyl carrier protein. This is Polyketide-8 synthase acyl carrier protein 1 from Streptomyces avermitilis (strain ATCC 31267 / DSM 46492 / JCM 5070 / NBRC 14893 / NCIMB 12804 / NRRL 8165 / MA-4680).